Consider the following 364-residue polypeptide: MAMNYSAKDEVDGGPAGPPGGAAKTRRPDNTAFKQQRLPAWQPILTAGTVLPTFFIIGLIFIPIGIGIFVTSNNIREIEIDYTGTEPSSPCNKCLSPNVTSCACTINFTLKQSFEGNVFMYYGLSNFYQNHRRYVKSRDDSQLNGDPSALLNPSKECEPYRRNEDRPIAPCGAIANSMFNDTLELYLVANESDPKPIPIPLKKKGIAWWTDKNVKFRNPPGKESLEEKFKDTIKPVNWHKAVYELDPEDESNNGFINEDFIVWMRTAALPTFRKLYRLIERRDDLHPTLPAGQYFLNITYNYPVHSFDGRKRMILSTISWMGGKNPFLGIAYITIGSISFLLGVVLLVINHKYRNSSNTADITI.

Residues M1–P28 form a disordered region. At A2 the chain carries N-acetylalanine. Topologically, residues A2–T49 are cytoplasmic. Residues V50–V70 form a helical membrane-spanning segment. Residues T71–L328 are Exoplasmic loop-facing. 3 disulfides stabilise this stretch: C91–C104, C94–C102, and C157–C171. N-linked (GlcNAc...) asparagine glycosylation is present at N98. A glycan (N-linked (GlcNAc...) asparagine) is linked at N297. A helical membrane pass occupies residues G329–I349. Residues N350 to I364 lie on the Cytoplasmic side of the membrane.

It belongs to the CDC50/LEM3 family. Component of various P4-ATPase flippase complexes which consists of a catalytic alpha subunit and an accessory beta subunit. Interacts with ATP8A1 to form a flippase complex; this complex forms an intermediate phosphoenzyme. The ATP8A2:TMEM30A flippase complex has been purified, and ATP8B1:TMEM30A and ATP8B2:TMEM30A flippase complexes have been shown to form intermediate phosphoenzymes in vitro. Interacts with alpha subunits ATP8A1, ATP8B1, ATP8B2, ATP8B4, ATP10A, ATP10B, ATP10D, ATP11A, ATP11B and ATP11C. In terms of processing, N-glycosylated. Contains high mannose-type oligosaccharides. Expressed in photoreceptor cells; detected in retina outer segment (at protein level). Detected in hepatocytes liver sinusoidal endothelial cells and kidney brush border of the proximal tubules (at protein level). Expressed in brain (at protein level).

The protein localises to the membrane. It localises to the cell membrane. The protein resides in the golgi apparatus. It is found in the cytoplasmic vesicle. Its subcellular location is the secretory vesicle membrane. The protein localises to the apical cell membrane. In terms of biological role, accessory component of a P4-ATPase flippase complex which catalyzes the hydrolysis of ATP coupled to the transport of aminophospholipids from the outer to the inner leaflet of various membranes and ensures the maintenance of asymmetric distribution of phospholipids. Phospholipid translocation also seems to be implicated in vesicle formation and in uptake of lipid signaling molecules. The beta subunit may assist in binding of the phospholipid substrate. Required for the proper folding, assembly and ER to Golgi exit of the ATP8A2:TMEM30A flippase complex. ATP8A2:TMEM30A may be involved in regulation of neurite outgrowth, and, reconstituted to liposomes, predomiminantly transports phosphatidylserine (PS) and to a lesser extent phosphatidylethanolamine (PE). The ATP8A1:TMEM30A flippase complex seems to play a role in regulation of cell migration probably involving flippase-mediated translocation of phosphatidylethanolamine (PE) at the plasma membrane. Required for the formation of the ATP8A2, ATP8B1 and ATP8B2 P-type ATPAse intermediate phosphoenzymes. Involved in uptake of platelet-activating factor (PAF). Can also mediate the export of alpha subunits ATP8A1, ATP8B1, ATP8B2, ATP8B4, ATP10A, ATP10B, ATP10D, ATP11A, ATP11B and ATP11C from the ER to other membrane localizations. The sequence is that of Cell cycle control protein 50A from Mus musculus (Mouse).